The following is a 258-amino-acid chain: Ubiquinone/menaquinone biosynthesis C-methyltransferase UbiE (258 aa).

The disordered stretch occupies residues 1–21; it reads MSESRTSADGGMETSYGFREV. Residues Thr-81, Asp-102, and 130–131 contribute to the S-adenosyl-L-methionine site; that span reads NA.

Belongs to the class I-like SAM-binding methyltransferase superfamily. MenG/UbiE family.

It carries out the reaction a 2-demethylmenaquinol + S-adenosyl-L-methionine = a menaquinol + S-adenosyl-L-homocysteine + H(+). The enzyme catalyses a 2-methoxy-6-(all-trans-polyprenyl)benzene-1,4-diol + S-adenosyl-L-methionine = a 5-methoxy-2-methyl-3-(all-trans-polyprenyl)benzene-1,4-diol + S-adenosyl-L-homocysteine + H(+). The protein operates within quinol/quinone metabolism; menaquinone biosynthesis; menaquinol from 1,4-dihydroxy-2-naphthoate: step 2/2. It functions in the pathway cofactor biosynthesis; ubiquinone biosynthesis. Its function is as follows. Methyltransferase required for the conversion of demethylmenaquinol (DMKH2) to menaquinol (MKH2) and the conversion of 2-polyprenyl-6-methoxy-1,4-benzoquinol (DDMQH2) to 2-polyprenyl-3-methyl-6-methoxy-1,4-benzoquinol (DMQH2). The protein is Ubiquinone/menaquinone biosynthesis C-methyltransferase UbiE of Rhizobium johnstonii (strain DSM 114642 / LMG 32736 / 3841) (Rhizobium leguminosarum bv. viciae).